A 1094-amino-acid chain; its full sequence is MGNAAGSAEQPAGPTASPPKQPAVPKQPMPAAGELEERFTRVLNCMNLPPDKVQLLSQYDNEKKWELICDQERFQVKNPPAAYIQKLKSYLDTGGVSRKVASDWMSNLGFKRRVQESTQVLRELETSLRTNHIGWVQEFLNEENRGLDVLLEYLAFAQCSVAYDMESTDSVASGAEKSKPLDQSVEDLSKAPPSSVPKSRLTIKLTPAHSRKALRNSRIVSQKDDVHVCIMCLRAIMNYQSGFSLVMNHPACVNEIALSLNNKSPRTKALVLELLAAVCLVRGGHDIILAAFDNFKEVCGEQHRFEKLMEYFRHEDSNIDFMVACMQFINIVVHSVENMNFRVFLQYEFTHLGLDLYLERLRLTESDKLQVQIQAYLDNVFDVGTLLEETETKNAVLEHMEELQEQVATLTERLRDTENDSMAKIAELEKQLSQARKELETLRERFSESTPMGTSRRIPEPEKVPVPTVVRPSALELKVEELEEKGLIRILRGPGDVVSIEILPGAAATPSGDDAQAPRVSTDSPSTAESIPEAASPPPPPPPPPPPLPNLQSQQEAPPSAPPLAPPLPGCAEPPPAPPLPGDLPPPPPPPPLGTDGPVPPPPPPPPGGPPDILGGQGPDIGPGVKAKKPIQTKFRMPLLNWVALKPSQITGTVFTELNDEKVLQELDMNDFEEHFKTKSQGPCLDISALKGKASQKAPTKTILIEANRAKNLAITLRKGNLGADRICQAIETYDLQTLSLDFLELLTRFLPTDYERSLIARFEKEQRPMEELSEEDRFMLRFSRIQRLPERMNTLTFLGNFPDTAQLLMPQLNAIIAASMSIKSSDKLRQILEIVLAFGNYMNSSKRGAAYGFRLQSLDALLEMKSTDRKQTLLHYLVKVIAEKYPQLTGFHSDLHFLDKAGSVSLDSVLGDVRSLQRGLELTQREFVRQDDCLVLKEFLRANSPTMDKLLADSKTAQEAYESVVEYFGENPKTTSPSMFFSLFSRFTKAYKKAEQEVEQWKKEAAADTSGREEPPTPKSPPKARRQQMDLISELKRKQQKEPLIYESDRDGAIEDIITDLRNQPYIRADTGRRSARRRPPGPPLPVTTDLAL.

Disordered stretches follow at residues methionine 1–methionine 29, serine 173–serine 199, and alanine 507–alanine 627. Residue glycine 2 is the site of N-myristoyl glycine attachment. Position 7 is a phosphoserine (serine 7). The span at alanine 16 to proline 28 shows a compositional bias: pro residues. One can recognise a GBD/FH3 domain in the interval glutamine 27–valine 464. At serine 184 the chain carries Phosphoserine. Residues arginine 519–glutamate 529 show a composition bias toward polar residues. Pro residues-rich tracts occupy residues alanine 535–proline 549 and proline 559–proline 610. The 392-residue stretch at alanine 627–threonine 1018 folds into the FH2 domain. Serine 688 is modified (phosphoserine). A compositionally biased stretch (basic and acidic residues) spans tryptophan 1002–proline 1017. Residues tryptophan 1002–leucine 1094 are disordered. Serine 1021 is modified (phosphoserine). Residues serine 1049–proline 1082 enclose the DAD domain.

Belongs to the formin homology family. As to quaternary structure, interacts with RAC1, PFN1 and PFN2. Interacts (activated by RAC1) with SRGAP2 (via SH3 domain); regulates the actin filament severing activity of FMNL1. Myristoylation mediates membrane localization. Highly expressed in the spleen, lymph node and bone marrow cells.

The protein resides in the cytoplasm. The protein localises to the cell membrane. Its subcellular location is the cytoplasmic vesicle. It localises to the phagosome. Plays a role in the regulation of cell morphology and cytoskeletal organization. Required in the cortical actin filament dynamics and cell shape. May play a role in the control of cell motility and survival of macrophages. The sequence is that of Formin-like protein 1 (Fmnl1) from Mus musculus (Mouse).